Here is an 89-residue protein sequence, read N- to C-terminus: Small ribosomal subunit protein uS15 (89 aa).

It belongs to the universal ribosomal protein uS15 family. Part of the 30S ribosomal subunit. Forms a bridge to the 50S subunit in the 70S ribosome, contacting the 23S rRNA.

In terms of biological role, one of the primary rRNA binding proteins, it binds directly to 16S rRNA where it helps nucleate assembly of the platform of the 30S subunit by binding and bridging several RNA helices of the 16S rRNA. Forms an intersubunit bridge (bridge B4) with the 23S rRNA of the 50S subunit in the ribosome. The polypeptide is Small ribosomal subunit protein uS15 (Chlorobaculum parvum (strain DSM 263 / NCIMB 8327) (Chlorobium vibrioforme subsp. thiosulfatophilum)).